Here is a 145-residue protein sequence, read N- to C-terminus: Bacilliredoxin SSP1241 (145 aa).

The protein belongs to the bacilliredoxin family.

This is Bacilliredoxin SSP1241 from Staphylococcus saprophyticus subsp. saprophyticus (strain ATCC 15305 / DSM 20229 / NCIMB 8711 / NCTC 7292 / S-41).